Here is a 474-residue protein sequence, read N- to C-terminus: Iroquois-class homeodomain protein IRX-2 (474 aa).

Positions Asp-115–Asn-177 form a DNA-binding region, homeobox; TALE-type. 3 disordered regions span residues Asn-177–Gly-220, Glu-262–Ser-373, and Pro-420–Glu-461. Ser-187 carries the phosphoserine modification. A compositionally biased stretch (basic and acidic residues) spans Asp-196 to Asp-210. Positions Glu-262–Glu-275 are enriched in acidic residues. 2 stretches are compositionally biased toward low complexity: residues Glu-293–Pro-305 and Pro-358–Ser-373.

This sequence belongs to the TALE/IRO homeobox family. As to expression, expressed in specific and overlapping patterns with Irx1 and Irx3 in the developing and adult metanephric kidney. In the adult metanephros, renal expression is found in the loop of Henle in the S3 proximal tubule segment and in the thick ascending limb (TAL) of the distal tubule.

It is found in the nucleus. This is Iroquois-class homeodomain protein IRX-2 (Irx2) from Mus musculus (Mouse).